Reading from the N-terminus, the 457-residue chain is Bifunctional protein GlmU (457 aa).

A pyrophosphorylase region spans residues 1 to 232 (MAKVAAIVLA…PMEVMGVNDR (232 aa)). UDP-N-acetyl-alpha-D-glucosamine contacts are provided by residues 9 to 12 (LAAG), Lys23, Gln75, and 80 to 81 (GT). Position 105 (Asp105) interacts with Mg(2+). The UDP-N-acetyl-alpha-D-glucosamine site is built by Gly142, Glu157, Asn172, and Asn230. Asn230 provides a ligand contact to Mg(2+). The interval 233–253 (VQLAEAGRIIRVRINKALMVA) is linker. Positions 254 to 457 (GTTIIDPETT…NKEGWKLKNK (204 aa)) are N-acetyltransferase. UDP-N-acetyl-alpha-D-glucosamine is bound by residues Arg336 and Lys354. His366 serves as the catalytic Proton acceptor. Residues Tyr369 and Asn380 each coordinate UDP-N-acetyl-alpha-D-glucosamine. Residues 389-390 (NY), Ser408, Ala426, and Arg443 contribute to the acetyl-CoA site.

This sequence in the N-terminal section; belongs to the N-acetylglucosamine-1-phosphate uridyltransferase family. It in the C-terminal section; belongs to the transferase hexapeptide repeat family. Homotrimer. Mg(2+) is required as a cofactor.

It localises to the cytoplasm. It carries out the reaction alpha-D-glucosamine 1-phosphate + acetyl-CoA = N-acetyl-alpha-D-glucosamine 1-phosphate + CoA + H(+). The catalysed reaction is N-acetyl-alpha-D-glucosamine 1-phosphate + UTP + H(+) = UDP-N-acetyl-alpha-D-glucosamine + diphosphate. It participates in nucleotide-sugar biosynthesis; UDP-N-acetyl-alpha-D-glucosamine biosynthesis; N-acetyl-alpha-D-glucosamine 1-phosphate from alpha-D-glucosamine 6-phosphate (route II): step 2/2. The protein operates within nucleotide-sugar biosynthesis; UDP-N-acetyl-alpha-D-glucosamine biosynthesis; UDP-N-acetyl-alpha-D-glucosamine from N-acetyl-alpha-D-glucosamine 1-phosphate: step 1/1. It functions in the pathway bacterial outer membrane biogenesis; LPS lipid A biosynthesis. Catalyzes the last two sequential reactions in the de novo biosynthetic pathway for UDP-N-acetylglucosamine (UDP-GlcNAc). The C-terminal domain catalyzes the transfer of acetyl group from acetyl coenzyme A to glucosamine-1-phosphate (GlcN-1-P) to produce N-acetylglucosamine-1-phosphate (GlcNAc-1-P), which is converted into UDP-GlcNAc by the transfer of uridine 5-monophosphate (from uridine 5-triphosphate), a reaction catalyzed by the N-terminal domain. The chain is Bifunctional protein GlmU from Geotalea daltonii (strain DSM 22248 / JCM 15807 / FRC-32) (Geobacter daltonii).